A 360-amino-acid polypeptide reads, in one-letter code: Peptide chain release factor 1 (360 aa).

Gln235 carries the post-translational modification N5-methylglutamine. The tract at residues 284 to 303 (RERQSKEAAERKSLVGSGDR) is disordered.

It belongs to the prokaryotic/mitochondrial release factor family. Methylated by PrmC. Methylation increases the termination efficiency of RF1.

It localises to the cytoplasm. Functionally, peptide chain release factor 1 directs the termination of translation in response to the peptide chain termination codons UAG and UAA. The chain is Peptide chain release factor 1 from Bordetella avium (strain 197N).